The chain runs to 215 residues: CASP-like protein 1E1 (215 aa).

The Cytoplasmic segment spans residues 1–51 (MESSRGKPGLNGSGGGAAAFDYSSRRGYYTGAGAALPPLAAGSRAPPVDPC). The helical transmembrane segment at 52 to 72 (CVVLRVFVLLGTLASAVVMAA) threads the bilayer. Residues 73-103 (DRQSTTVQIAAGEELAPPLRVPVTAKWTYSS) lie on the Extracellular side of the membrane. A helical membrane pass occupies residues 104 to 124 (AFVYFVVANAMVFAFSAAALA). Residues 125-130 (AVRRRS) are Cytoplasmic-facing. Residues 131-151 (AVVPVMVGDLVAMALLFSAVG) traverse the membrane as a helical segment. Over 152–185 (AAAQFGLLGERGNAHVRWAKVCDVYGPFCERAMA) the chain is Extracellular. Residues 186-206 (AVVVALIAAFADLVLLMLTIL) form a helical membrane-spanning segment. Residues 207–215 (TIHKASSYY) lie on the Cytoplasmic side of the membrane.

The protein belongs to the Casparian strip membrane proteins (CASP) family. In terms of assembly, homodimer and heterodimers.

It is found in the cell membrane. The polypeptide is CASP-like protein 1E1 (Oryza sativa subsp. japonica (Rice)).